Here is a 1574-residue protein sequence, read N- to C-terminus: Plexin-C1 (1574 aa).

Positions 1–34 are cleaved as a signal peptide; the sequence is MEVSRRKTPPRPPYPAAPLPLIAYLLALAAPARG. The region spanning 35-452 is the Sema domain; that stretch reads ADEPVWRSEQ…AGKEVRRIPV (418 aa). The Extracellular segment spans residues 35 to 950; the sequence is ADEPVWRSEQ…YVEQESVPST (916 aa). A disulfide bond links Cys64 and Cys87. Residues Asn86, Asn143, and Asn149 are each glycosylated (N-linked (GlcNAc...) asparagine). An intrachain disulfide couples Cys156 to Cys194. Residue Asn252 is glycosylated (N-linked (GlcNAc...) asparagine). Residues Cys283 and Cys329 are joined by a disulfide bond. Residues Asn386 and Asn407 are each glycosylated (N-linked (GlcNAc...) asparagine). 4 cysteine pairs are disulfide-bonded: Cys455–Cys472, Cys461–Cys506, Cys464–Cys481, and Cys475–Cys487. N-linked (GlcNAc...) asparagine glycans are attached at residues Asn694, Asn773, and Asn802. Residues 951-971 traverse the membrane as a helical segment; it reads WYFLIALPILLAIVIVVAVVV. Residues 972-1574 are Cytoplasmic-facing; that stretch reads TRYKSKELSR…FDEKKKCKWM (603 aa). The residue at position 984 (Ser984) is a Phosphoserine.

The protein belongs to the plexin family. In terms of assembly, monomer. Homodimer. Interacts with SEMA7A. Detected on dendritic cells, skin Langerhans cells and neutrophils (at protein level).

The protein localises to the membrane. Its function is as follows. Receptor for SEMA7A, for vaccinia virus semaphorin A39R and for herpesvirus Sema protein. Binding of semaphorins triggers cellular responses leading to the rearrangement of the cytoskeleton and to secretion of IL6 and IL8. The chain is Plexin-C1 (Plxnc1) from Mus musculus (Mouse).